A 167-amino-acid chain; its full sequence is Ureidoglycolate lyase (167 aa).

This sequence belongs to the ureidoglycolate lyase family. As to quaternary structure, homodimer. The cofactor is Ni(2+).

It carries out the reaction (S)-ureidoglycolate = urea + glyoxylate. It participates in nitrogen metabolism; (S)-allantoin degradation. In terms of biological role, catalyzes the catabolism of the allantoin degradation intermediate (S)-ureidoglycolate, generating urea and glyoxylate. Involved in the utilization of allantoin as nitrogen source. In Pseudomonas entomophila (strain L48), this protein is Ureidoglycolate lyase.